The chain runs to 300 residues: Kynurenine formamidase (300 aa).

The HGGXW motif lies at 86 to 90 (HGGYW). Catalysis depends on S157, which acts as the Nucleophile. Residues D244 and H276 contribute to the active site.

Belongs to the kynurenine formamidase family. As to quaternary structure, homodimer.

The enzyme catalyses N-formyl-L-kynurenine + H2O = L-kynurenine + formate + H(+). It functions in the pathway amino-acid degradation; L-tryptophan degradation via kynurenine pathway; L-kynurenine from L-tryptophan: step 2/2. Functionally, catalyzes the hydrolysis of N-formyl-L-kynurenine to L-kynurenine, the second step in the kynurenine pathway of tryptophan degradation. Required for elimination of toxic metabolites. This chain is Kynurenine formamidase (KFase), found in Drosophila melanogaster (Fruit fly).